A 198-amino-acid chain; its full sequence is Recombination protein RecR (198 aa).

The C4-type zinc-finger motif lies at 58-73 (CSTCGNFTDTDPCALC). A Toprim domain is found at 81–175 (STICVVEQPK…KVTRIAAGIP (95 aa)).

Belongs to the RecR family.

Functionally, may play a role in DNA repair. It seems to be involved in an RecBC-independent recombinational process of DNA repair. It may act with RecF and RecO. This Clostridium botulinum (strain Alaska E43 / Type E3) protein is Recombination protein RecR.